Consider the following 647-residue polypeptide: Replication protein E1 (647 aa).

The Nuclear localization signal motif lies at 86-88 (KRK). The residue at position 92 (Ser92) is a Phosphoserine; by host. Positions 154–186 (TNGDAEGEHGGSVREECSSVDSAIDSENQDPKS) are disordered. The segment covering 159–170 (EGEHGGSVREEC) has biased composition (basic and acidic residues). Residues 183 to 349 (DPKSPTAQIK…LTVIQHGIDD (167 aa)) form a DNA-binding region region. An SF3 helicase domain is found at 448 to 598 (IEFISFLCAL…FPFDQNRNPV (151 aa)). 474–481 (GPANTGKS) serves as a coordination point for ATP. Lys555 participates in a covalent cross-link: Glycyl lysine isopeptide (Lys-Gly) (interchain with G-Cter in SUMO).

The protein belongs to the papillomaviridae E1 protein family. As to quaternary structure, can form hexamers. Interacts with E2 protein; this interaction increases E1 DNA binding specificity. Interacts with host DNA polymerase subunit POLA2. Interacts with host single stranded DNA-binding protein RPA1. Interacts with host TOP1; this interaction stimulates the enzymatic activity of TOP1. Post-translationally, phosphorylated. In terms of processing, sumoylated.

It localises to the host nucleus. The catalysed reaction is Couples ATP hydrolysis with the unwinding of duplex DNA by translocating in the 3'-5' direction.. It catalyses the reaction ATP + H2O = ADP + phosphate + H(+). ATP-dependent DNA 3'-5' helicase required for initiation of viral DNA replication. It forms a complex with the viral E2 protein. The E1-E2 complex binds to the replication origin which contains binding sites for both proteins. During the initial step, a dimer of E1 interacts with a dimer of protein E2 leading to a complex that binds the viral origin of replication with high specificity. Then, a second dimer of E1 displaces the E2 dimer in an ATP-dependent manner to form the E1 tetramer. Following this, two E1 monomers are added to each half of the site, which results in the formation of two E1 trimers on the viral ori. Subsequently, two hexamers will be created. The double hexamer acts as a bi-directional helicase machinery and unwinds the viral DNA and then recruits the host DNA polymerase to start replication. This is Replication protein E1 from Human papillomavirus 39.